The following is a 471-amino-acid chain: U1 small nuclear ribonucleoprotein 70 kDa (471 aa).

Residues 48–78 (FEDPRDAPPPTRAETREERMERKRREKIERR) are disordered. Residues 60–78 (AETREERMERKRREKIERR) show a composition bias toward basic and acidic residues. The interval 92–202 (HNDQNAQGDA…GGGLGGTRRG (111 aa)) is required for interaction with U1 RNA. Residues 103-184 (KTLFVARVNY…LVDVERGRTV (82 aa)) form the RRM domain. A disordered region spans residues 187 to 471 (WRPRRLGGGL…NGYMMEPPME (285 aa)). Gly residues predominate over residues 192-201 (LGGGLGGTRR). The span at 207–245 (NIRHSGRDDTSRYDERDRDRERERDRRERSRERDKERER) shows a compositional bias: basic and acidic residues. Positions 246–259 (RRSRSRERRRRSRS) are enriched in basic residues. The span at 260-293 (REKEERKRSRERSRDKDKDKDKDKDKEKDKDKDR) shows a compositional bias: basic and acidic residues. Residues 294 to 303 (DRKRRSRSRE) show a composition bias toward basic residues. Basic and acidic residues-rich tracts occupy residues 304–321 (RKRE…RVEG) and 344–428 (IELK…ERVP).

Component of the U1 snRNP. The U1 snRNP is composed of the U1 snRNA and the 7 core Sm proteins snrpb, snrpd1, snrpd2, snrpd3, snrpe, snrpf and snrpg that assemble in a heptameric protein ring on the Sm site of the small nuclear RNA to form the core snRNP, and at least three U1 snRNP-specific proteins snrnp70/U1-70K, snrpa/U1-A and snrpc/U1-C.

The protein localises to the nucleus speckle. It localises to the nucleus. Its subcellular location is the nucleoplasm. Functionally, component of the spliceosomal U1 snRNP, which is essential for recognition of the pre-mRNA 5' splice-site and the subsequent assembly of the spliceosome. snrnp70 binds to the loop I region of U1-snRNA. The polypeptide is U1 small nuclear ribonucleoprotein 70 kDa (snrnp70) (Xenopus tropicalis (Western clawed frog)).